The sequence spans 400 residues: Peptidase M20 domain-containing protein C757.05c (400 aa).

The first 25 residues, 1 to 25, serve as a signal peptide directing secretion; sequence MTMKISVWSLLIVIGYHLWMSPVLA. N-linked (GlcNAc...) asparagine glycosylation is present at Asn80. Position 152 (Asp152) interacts with Zn(2+). Catalysis depends on Glu186, which acts as the Proton acceptor. Glu187 is a binding site for Zn(2+).

The protein belongs to the peptidase M20A family. It depends on Zn(2+) as a cofactor.

It localises to the secreted. This Schizosaccharomyces pombe (strain 972 / ATCC 24843) (Fission yeast) protein is Peptidase M20 domain-containing protein C757.05c.